The sequence spans 172 residues: CD-NTase-associated protein 7 (172 aa).

Residues 141–172 (AQSPGINGYLENDKTYSAGGRSLTRTSVRNFV) are required for binding to CdnC and to confer phage immunity.

It belongs to the bacterial HORMA family. HORMA1 subfamily. Forms complexes with CdnC with 1:1 and 2:2 stoichimetry, and a 1:1:6 CdnC:Cap7:Cap6 complex.

Its function is as follows. Sensor protein of a CBASS antivirus system. CBASS (cyclic oligonucleotide-based antiphage signaling system) provides immunity against bacteriophage. The CD-NTase protein synthesizes cyclic nucleotides in response to infection; these serve as specific second messenger signals. The signals activate a diverse range of effectors, leading to bacterial cell death and thus abortive phage infection. A type III-C(AAA) CBASS system. Binds to a closure peptide (consensus His-Xaa-Xaa-Ile-Leu-Leu-Thr), which allows it to activate CdnC for second messenger synthesis. In terms of biological role, protects E.coli strain JP313 against bacteriophage lambda cI- infection. When the cdnC-cap7-cap6-nucC operon is transformed into a susceptible strain it confers bacteriophage immunity. Mutations in the sensor (Cap7 also called HORMA) or effector proteins (CdnC, NucC) but not the disassembly protein (Cap6 also called Trip13) no longer confer immunity. The presence of the intact operon leads to culture collapse and cell death, which occurs before the phage has finished its replication cycle, thus protecting non-infected bacteria by aborting the phage infection and preventing its propagation. The sequence is that of CD-NTase-associated protein 7 from Escherichia coli (strain MS 115-1).